The sequence spans 240 residues: 2,3,4,5-tetrahydropyridine-2,6-dicarboxylate N-acetyltransferase (240 aa).

It belongs to the transferase hexapeptide repeat family. DapH subfamily.

The enzyme catalyses (S)-2,3,4,5-tetrahydrodipicolinate + acetyl-CoA + H2O = L-2-acetamido-6-oxoheptanedioate + CoA. Its pathway is amino-acid biosynthesis; L-lysine biosynthesis via DAP pathway; LL-2,6-diaminopimelate from (S)-tetrahydrodipicolinate (acetylase route): step 1/3. Functionally, catalyzes the transfer of an acetyl group from acetyl-CoA to tetrahydrodipicolinate. This is 2,3,4,5-tetrahydropyridine-2,6-dicarboxylate N-acetyltransferase from Halalkalibacterium halodurans (strain ATCC BAA-125 / DSM 18197 / FERM 7344 / JCM 9153 / C-125) (Bacillus halodurans).